Here is a 721-residue protein sequence, read N- to C-terminus: Polyribonucleotide nucleotidyltransferase (721 aa).

Residues Asp-495 and Asp-501 each contribute to the Mg(2+) site. The KH domain occupies Pro-562–Ile-621. Residues Gly-631–Arg-699 form the S1 motif domain. Residues Gly-700–Asn-721 form a disordered region.

The protein belongs to the polyribonucleotide nucleotidyltransferase family. Requires Mg(2+) as cofactor.

The protein localises to the cytoplasm. The enzyme catalyses RNA(n+1) + phosphate = RNA(n) + a ribonucleoside 5'-diphosphate. Functionally, involved in mRNA degradation. Catalyzes the phosphorolysis of single-stranded polyribonucleotides processively in the 3'- to 5'-direction. This Prochlorococcus marinus (strain MIT 9303) protein is Polyribonucleotide nucleotidyltransferase.